The chain runs to 802 residues: Copper-exporting P-type ATPase (802 aa).

HMA domains are found at residues 5 to 70 (KKTT…YGVA) and 72 to 138 (ETVE…YDAS). Residues Cys-16, Cys-19, Cys-83, and Cys-86 each contribute to the Cu(+) site. The next 6 helical transmembrane spans lie at 161 to 181 (LIIS…HLFN), 192 to 212 (WFQF…FYVG), 224 to 244 (MDVL…YEMV), 256 to 276 (LYFE…YLEA), 411 to 431 (YFVP…ITLV), and 438 to 458 (PALV…LGLA). The 4-aspartylphosphate intermediate role is filled by Asp-495. Positions 690 and 694 each coordinate Mg(2+). The next 2 helical transmembrane spans lie at 748 to 767 (LFWA…LGLL) and 771 to 790 (VAGA…ALRL).

It belongs to the cation transport ATPase (P-type) (TC 3.A.3) family. Type IB subfamily.

The protein resides in the cell membrane. The catalysed reaction is Cu(+)(in) + ATP + H2O = Cu(+)(out) + ADP + phosphate + H(+). Involved in copper export. This is Copper-exporting P-type ATPase (copA) from Staphylococcus aureus (strain MRSA252).